A 272-amino-acid polypeptide reads, in one-letter code: Small ribosomal subunit protein uS2 (272 aa).

The segment covering 224–233 (EGKKAREERQ) has biased composition (basic and acidic residues). The segment at 224–272 (EGKKAREERQLAAAKDAAGDAKPEAEEAPAAAEAEEAPAAEAEEAPAAE) is disordered. A compositionally biased stretch (acidic residues) spans 256–272 (EAEEAPAAEAEEAPAAE).

Belongs to the universal ribosomal protein uS2 family.

This chain is Small ribosomal subunit protein uS2, found in Corynebacterium glutamicum (strain ATCC 13032 / DSM 20300 / JCM 1318 / BCRC 11384 / CCUG 27702 / LMG 3730 / NBRC 12168 / NCIMB 10025 / NRRL B-2784 / 534).